The chain runs to 670 residues: DNA ligase (670 aa).

NAD(+)-binding positions include 32 to 36 (DAEYD), 81 to 82 (SL), and Glu-113. Lys-115 acts as the N6-AMP-lysine intermediate in catalysis. NAD(+)-binding residues include Arg-136, Glu-173, Lys-290, and Lys-314. Zn(2+) is bound by residues Cys-406, Cys-409, Cys-424, and Cys-430. A BRCT domain is found at 592-670 (EIDSPFAGKT…EQEMMRLLGE (79 aa)).

This sequence belongs to the NAD-dependent DNA ligase family. LigA subfamily. It depends on Mg(2+) as a cofactor. Mn(2+) serves as cofactor.

It carries out the reaction NAD(+) + (deoxyribonucleotide)n-3'-hydroxyl + 5'-phospho-(deoxyribonucleotide)m = (deoxyribonucleotide)n+m + AMP + beta-nicotinamide D-nucleotide.. DNA ligase that catalyzes the formation of phosphodiester linkages between 5'-phosphoryl and 3'-hydroxyl groups in double-stranded DNA using NAD as a coenzyme and as the energy source for the reaction. It is essential for DNA replication and repair of damaged DNA. The protein is DNA ligase of Erwinia tasmaniensis (strain DSM 17950 / CFBP 7177 / CIP 109463 / NCPPB 4357 / Et1/99).